The primary structure comprises 201 residues: MARYTGPKSKIARKFGDPIFGADKVLSKKNYPPGQHGNNRRRKTSEYGLQLREKQKAKYTYGVLEKQFRHLFHRAQRAKGVTGELLIQFLEARLDNVVFRLGIAPTRSAARQLVSHRHITVDGSVVNIPSYSVKPGQVIGVRERSKSLEVIADALTGFNHSKYPWMEWDQSSLSGKLLHMPDRTDIPENIKEQLIVELYSK.

Residues 26 to 47 (LSKKNYPPGQHGNNRRRKTSEY) are disordered. Residues 92–154 (ARLDNVVFRL…SKSLEVIADA (63 aa)) form the S4 RNA-binding domain.

The protein belongs to the universal ribosomal protein uS4 family. Part of the 30S ribosomal subunit. Contacts protein S5. The interaction surface between S4 and S5 is involved in control of translational fidelity.

In terms of biological role, one of the primary rRNA binding proteins, it binds directly to 16S rRNA where it nucleates assembly of the body of the 30S subunit. Functionally, with S5 and S12 plays an important role in translational accuracy. The sequence is that of Small ribosomal subunit protein uS4 from Porphyromonas gingivalis (strain ATCC 33277 / DSM 20709 / CIP 103683 / JCM 12257 / NCTC 11834 / 2561).